Here is a 509-residue protein sequence, read N- to C-terminus: Photosystem II CP47 reaction center protein (509 aa).

6 helical membrane-spanning segments follow: residues 21–36 (SVHI…WAGS), 101–115 (IVFS…IWHW), 140–156 (GIHL…FGAF), 203–218 (IAAG…FHLS), 237–252 (VLSS…AFVV), and 457–472 (SFAL…HGAR).

It belongs to the PsbB/PsbC family. PsbB subfamily. In terms of assembly, PSII is composed of 1 copy each of membrane proteins PsbA, PsbB, PsbC, PsbD, PsbE, PsbF, PsbH, PsbI, PsbJ, PsbK, PsbL, PsbM, PsbT, PsbX, PsbY, PsbZ, Psb30/Ycf12, at least 3 peripheral proteins of the oxygen-evolving complex and a large number of cofactors. It forms dimeric complexes. It depends on Binds multiple chlorophylls. PSII binds additional chlorophylls, carotenoids and specific lipids. as a cofactor.

The protein localises to the plastid. It localises to the chloroplast thylakoid membrane. In terms of biological role, one of the components of the core complex of photosystem II (PSII). It binds chlorophyll and helps catalyze the primary light-induced photochemical processes of PSII. PSII is a light-driven water:plastoquinone oxidoreductase, using light energy to abstract electrons from H(2)O, generating O(2) and a proton gradient subsequently used for ATP formation. The sequence is that of Photosystem II CP47 reaction center protein from Cicer arietinum (Chickpea).